Reading from the N-terminus, the 271-residue chain is Aliphatic sulfonates import ATP-binding protein SsuB (271 aa).

One can recognise an ABC transporter domain in the interval 13–234 (ITLESIGKRY…RKGSAKLAAL (222 aa)). 45–52 (GRSGCGKS) serves as a coordination point for ATP. The tract at residues 250–271 (EASRQGIKASRQGTATSRRVAN) is disordered. A compositionally biased stretch (polar residues) spans 260–271 (RQGTATSRRVAN).

Belongs to the ABC transporter superfamily. Aliphatic sulfonates importer (TC 3.A.1.17.2) family. The complex is composed of two ATP-binding proteins (SsuB), two transmembrane proteins (SsuC) and a solute-binding protein (SsuA).

It is found in the cell inner membrane. The catalysed reaction is ATP + H2O + aliphatic sulfonate-[sulfonate-binding protein]Side 1 = ADP + phosphate + aliphatic sulfonateSide 2 + [sulfonate-binding protein]Side 1.. Functionally, part of the ABC transporter complex SsuABC involved in aliphatic sulfonates import. Responsible for energy coupling to the transport system. This chain is Aliphatic sulfonates import ATP-binding protein SsuB, found in Yersinia pestis bv. Antiqua (strain Antiqua).